The sequence spans 467 residues: Polygalacturonase (467 aa).

Residues 1–27 form the signal peptide; that stretch reads MALQRRFFQFVIITLLIPSFILGYTSA. Asp283 functions as the Proton donor in the catalytic mechanism. Asn290 carries N-linked (GlcNAc...) asparagine glycosylation. The active site involves His306.

Belongs to the glycosyl hydrolase 28 family.

The protein localises to the secreted. It localises to the cell wall. It carries out the reaction (1,4-alpha-D-galacturonosyl)n+m + H2O = (1,4-alpha-D-galacturonosyl)n + (1,4-alpha-D-galacturonosyl)m.. Acts in concert with the pectinesterase, in the ripening process. Is involved in cell wall metabolism, specifically in polyuronide degradation. This chain is Polygalacturonase, found in Actinidia deliciosa (Kiwi).